The primary structure comprises 962 residues: Glycine dehydrogenase (decarboxylating) (962 aa).

Lys-709 is subject to N6-(pyridoxal phosphate)lysine.

It belongs to the GcvP family. The glycine cleavage system is composed of four proteins: P, T, L and H. Pyridoxal 5'-phosphate serves as cofactor.

The catalysed reaction is N(6)-[(R)-lipoyl]-L-lysyl-[glycine-cleavage complex H protein] + glycine + H(+) = N(6)-[(R)-S(8)-aminomethyldihydrolipoyl]-L-lysyl-[glycine-cleavage complex H protein] + CO2. The glycine cleavage system catalyzes the degradation of glycine. The P protein binds the alpha-amino group of glycine through its pyridoxal phosphate cofactor; CO(2) is released and the remaining methylamine moiety is then transferred to the lipoamide cofactor of the H protein. The chain is Glycine dehydrogenase (decarboxylating) from Shewanella oneidensis (strain ATCC 700550 / JCM 31522 / CIP 106686 / LMG 19005 / NCIMB 14063 / MR-1).